A 308-amino-acid chain; its full sequence is Acetaldehyde dehydrogenase (308 aa).

An NAD(+)-binding site is contributed by 25–28 (TGAI). Catalysis depends on Cys139, which acts as the Acyl-thioester intermediate. Asn279 is an NAD(+) binding site.

Belongs to the acetaldehyde dehydrogenase family.

It carries out the reaction acetaldehyde + NAD(+) + CoA = acetyl-CoA + NADH + H(+). This chain is Acetaldehyde dehydrogenase, found in Streptomyces griseus subsp. griseus (strain JCM 4626 / CBS 651.72 / NBRC 13350 / KCC S-0626 / ISP 5235).